The primary structure comprises 105 residues: Large ribosomal subunit protein uL24 (105 aa).

The protein belongs to the universal ribosomal protein uL24 family. As to quaternary structure, part of the 50S ribosomal subunit.

In terms of biological role, one of two assembly initiator proteins, it binds directly to the 5'-end of the 23S rRNA, where it nucleates assembly of the 50S subunit. Its function is as follows. One of the proteins that surrounds the polypeptide exit tunnel on the outside of the subunit. The chain is Large ribosomal subunit protein uL24 from Wolbachia pipientis wMel.